A 245-amino-acid polypeptide reads, in one-letter code: DNA repair protein RecO (245 aa).

This sequence belongs to the RecO family.

Functionally, involved in DNA repair and RecF pathway recombination. This Porphyromonas gingivalis (strain ATCC BAA-308 / W83) protein is DNA repair protein RecO.